We begin with the raw amino-acid sequence, 348 residues long: uncharacterized protein (348 aa).

WD repeat units lie at residues 59-98, 142-182, 185-226, 229-267, 270-309, and 312-347; these read GFQG…VVYS, GHTD…LIQT, DNLG…LLGT, QQPG…ELFS, GPSL…QVTT, and GHQG…SALA.

This is an uncharacterized protein from Synechocystis sp. (strain ATCC 27184 / PCC 6803 / Kazusa).